The sequence spans 94 residues: DNA-directed RNA polymerase subunit omega (94 aa).

Belongs to the RNA polymerase subunit omega family. In terms of assembly, the RNAP catalytic core consists of 2 alpha, 1 beta, 1 beta' and 1 omega subunit. When a sigma factor is associated with the core the holoenzyme is formed, which can initiate transcription.

The enzyme catalyses RNA(n) + a ribonucleoside 5'-triphosphate = RNA(n+1) + diphosphate. Its function is as follows. Promotes RNA polymerase assembly. Latches the N- and C-terminal regions of the beta' subunit thereby facilitating its interaction with the beta and alpha subunits. The chain is DNA-directed RNA polymerase subunit omega from Limosilactobacillus fermentum (strain NBRC 3956 / LMG 18251) (Lactobacillus fermentum).